A 445-amino-acid polypeptide reads, in one-letter code: Dolichyl-diphosphooligosaccharide--protein glycosyltransferase 48 kDa subunit (445 aa).

An N-terminal signal peptide occupies residues 1–20 (MRWLPGLLLIASIGFHQSLA). Residues 21-405 (DRVLVLGETA…YERFIRSAYP (385 aa)) are Lumenal-facing. Residues 406–426 (YYASSFSMMAGLVLFSIVYLY) traverse the membrane as a helical segment. Topologically, residues 427–445 (HKDTPVKGAKVLDSEKKKN) are cytoplasmic.

Belongs to the DDOST 48 kDa subunit family. As to quaternary structure, component of the oligosaccharyltransferase (OST) complex.

The protein localises to the endoplasmic reticulum membrane. It functions in the pathway protein modification; protein glycosylation. Its function is as follows. Subunit of the oligosaccharyl transferase (OST) complex that catalyzes the initial transfer of a defined glycan (Glc(3)Man(9)GlcNAc(2) in eukaryotes) from the lipid carrier dolichol-pyrophosphate to an asparagine residue within an Asn-X-Ser/Thr consensus motif in nascent polypeptide chains, the first step in protein N-glycosylation. N-glycosylation occurs cotranslationally and the complex associates with the Sec61 complex at the channel-forming translocon complex that mediates protein translocation across the endoplasmic reticulum (ER). All subunits are required for a maximal enzyme activity. Required for the assembly of both SST3A- and SS3B-containing OST complexes. Required for normal lifespan. The polypeptide is Dolichyl-diphosphooligosaccharide--protein glycosyltransferase 48 kDa subunit (Caenorhabditis elegans).